The chain runs to 308 residues: Methionyl-tRNA formyltransferase (308 aa).

Residue 107–110 (SLLP) participates in (6S)-5,6,7,8-tetrahydrofolate binding.

It belongs to the Fmt family.

It carries out the reaction L-methionyl-tRNA(fMet) + (6R)-10-formyltetrahydrofolate = N-formyl-L-methionyl-tRNA(fMet) + (6S)-5,6,7,8-tetrahydrofolate + H(+). Its function is as follows. Attaches a formyl group to the free amino group of methionyl-tRNA(fMet). The formyl group appears to play a dual role in the initiator identity of N-formylmethionyl-tRNA by promoting its recognition by IF2 and preventing the misappropriation of this tRNA by the elongation apparatus. This Carboxydothermus hydrogenoformans (strain ATCC BAA-161 / DSM 6008 / Z-2901) protein is Methionyl-tRNA formyltransferase.